The primary structure comprises 273 residues: MTREITVGGVKIGGGRPLALVAGPCVIENETATLRCAERLMSICNGVGISLIFKASYDKANRTSVTAFRGPGMKEGLRILAKVKEALGVPVLSDIHSIEQVEPAAEVLDVLQIPAFLCRQTDLLVAAGNTGKVINVKKGQFLAPWDMKNVVGKISSCDNDNIILTERGASFGYNNLVVDMRSFPIMRSTGYPVIFDATHSVQLPGGEGTSSGGQREYVEFLSRAAVAAGVDGIFMEVHEEPEQALCDGPNSVRLDDMPALLKKLKAIDAIVNQ.

Belongs to the KdsA family.

The protein localises to the cytoplasm. It catalyses the reaction D-arabinose 5-phosphate + phosphoenolpyruvate + H2O = 3-deoxy-alpha-D-manno-2-octulosonate-8-phosphate + phosphate. Its pathway is carbohydrate biosynthesis; 3-deoxy-D-manno-octulosonate biosynthesis; 3-deoxy-D-manno-octulosonate from D-ribulose 5-phosphate: step 2/3. The protein operates within bacterial outer membrane biogenesis; lipopolysaccharide biosynthesis. The sequence is that of 2-dehydro-3-deoxyphosphooctonate aldolase from Citrifermentans bemidjiense (strain ATCC BAA-1014 / DSM 16622 / JCM 12645 / Bem) (Geobacter bemidjiensis).